Consider the following 422-residue polypeptide: Proton-gated ion channel subunit pbo-6 (422 aa).

An N-terminal signal peptide occupies residues 1–20 (MQCSFLTIFIFITTVTVGVA). The Extracellular portion of the chain corresponds to 21 to 233 (EFSEQYQGSS…IKVARKPFYY (213 aa)). Residues Cys151 and Cys165 are joined by a disulfide bond. 3 helical membrane passes run 234-254 (LISL…GLFA), 268-288 (LGVT…EKVP), and 294-314 (VPLL…ATIL). Over 315 to 378 (TSTVMRVHAK…GEVSRRMDYL (64 aa)) the chain is Cytoplasmic. Residues 379–399 (LASVFIIIISTPTLYLFYMCF) form a helical membrane-spanning segment.

The protein belongs to the ligand-gated ion channel (TC 1.A.9) family. Acetylcholine receptor (TC 1.A.9.1) subfamily. The functional channel is a hetero-oligomer of pbo-5 and pbo-6. Expressed in the posterior body muscles.

It is found in the membrane. In terms of biological role, forms a proton-gated ion channel with pbo-5 that is activated by acidification of the posterior coelomic space, leading to posterior body wall muscle contraction (pBoc) during the defecation cycle. Not necessary for stimulation of posterior body contraction (pBoc). Does not bind neurotransmitters such as acetylcholine, gamma-aminobutyric acid, glycine, serotonin, glutamate or choline. The protein is Proton-gated ion channel subunit pbo-6 of Caenorhabditis elegans.